The following is a 161-amino-acid chain: Putative allophycocyanin subunit alpha 2 (161 aa).

The residue at position 71 (Asn71) is an N4-methylasparagine. Cys81 lines the (2R,3E)-phycocyanobilin pocket.

The protein belongs to the phycobiliprotein family. In terms of assembly, heterohexamer of two alpha chains, one alpha-B chain and three beta chains. In terms of processing, contains one covalently linked phycocyanobilin chromophore. The chromophore is added by phycocyanobilin lyase CpcS 1.

It localises to the cellular thylakoid membrane. Its function is as follows. Light-harvesting photosynthetic bile pigment-protein from the phycobiliprotein complex. Allophycocyanin has a maximum absorption at approximately 650 to 653 nanometers. This is Putative allophycocyanin subunit alpha 2 (apcA2) from Nostoc sp. (strain PCC 7120 / SAG 25.82 / UTEX 2576).